We begin with the raw amino-acid sequence, 82 residues long: Omega-ctenitoxin-Pn1a (82 aa).

A signal peptide spans 1 to 21 (MWLKIQVFLLAITLITLGIQA). Positions 22-37 (EPNSSPNNPLIEEEAR) are excised as a propeptide. Intrachain disulfides connect C39/C54, C46/C59, C53/C70, and C61/C68. Positions 72–82 (KKFIEFFGGGK) are excised as a propeptide.

This sequence belongs to the neurotoxin 02 (plectoxin) family. In terms of tissue distribution, expressed by the venom gland.

The protein resides in the secreted. Its function is as follows. Antagonist of L-type calcium channels (Cav1/CACNA1). Induces immediate clockwise gyration and flaccid paralysis after 6 hours at dose levels of 5 ug per mouse. The protein is Omega-ctenitoxin-Pn1a of Phoneutria nigriventer (Brazilian armed spider).